A 355-amino-acid polypeptide reads, in one-letter code: Molybdenum import ATP-binding protein ModC (355 aa).

One can recognise an ABC transporter domain in the interval 1–233 (MTLIVEAKQR…PSTASDRREA (233 aa)). An ATP-binding site is contributed by 31-38 (GRSGSGKT). In terms of domain architecture, Mop spans 291–355 (GLSALNILEA…AIIKTVALEA (65 aa)).

The protein belongs to the ABC transporter superfamily. Molybdate importer (TC 3.A.1.8) family. As to quaternary structure, the complex is composed of two ATP-binding proteins (ModC), two transmembrane proteins (ModB) and a solute-binding protein (ModA).

Its subcellular location is the cell inner membrane. The catalysed reaction is molybdate(out) + ATP + H2O = molybdate(in) + ADP + phosphate + H(+). Its function is as follows. Part of the ABC transporter complex ModABC involved in molybdenum import. Responsible for energy coupling to the transport system. The sequence is that of Molybdenum import ATP-binding protein ModC from Rhizobium johnstonii (strain DSM 114642 / LMG 32736 / 3841) (Rhizobium leguminosarum bv. viciae).